Here is a 165-residue protein sequence, read N- to C-terminus: MNSLENLILVGVIKSCHGIKGHIILKSFTIPTTKILERNLVNESQENINIKLISQNAKGELICTFNDISTRNEAENLKGYKLFCLRASLPELEEDEFYIADLNHLTILDQDHKKVGKIKNILNFGAGDIIEIEFLDQTTELLPFNKQFFPVITKNYGILNYKREV.

One can recognise a PRC barrel domain in the interval glutamate 94–valine 165.

The protein belongs to the RimM family. Binds ribosomal protein uS19.

Its subcellular location is the cytoplasm. An accessory protein needed during the final step in the assembly of 30S ribosomal subunit, possibly for assembly of the head region. Essential for efficient processing of 16S rRNA. May be needed both before and after RbfA during the maturation of 16S rRNA. It has affinity for free ribosomal 30S subunits but not for 70S ribosomes. This is Ribosome maturation factor RimM from Rickettsia canadensis (strain McKiel).